The chain runs to 126 residues: Glycine cleavage system H protein (126 aa).

Positions 21–103 (TVTIGISEHA…YDGGWIVKVK (83 aa)) constitute a Lipoyl-binding domain. Lys-62 is modified (N6-lipoyllysine).

The protein belongs to the GcvH family. As to quaternary structure, the glycine cleavage system is composed of four proteins: P, T, L and H. The cofactor is (R)-lipoate.

Its function is as follows. The glycine cleavage system catalyzes the degradation of glycine. The H protein shuttles the methylamine group of glycine from the P protein to the T protein. This chain is Glycine cleavage system H protein, found in Vibrio cholerae serotype O1 (strain ATCC 39541 / Classical Ogawa 395 / O395).